A 305-amino-acid chain; its full sequence is tRNA dimethylallyltransferase (305 aa).

An ATP-binding site is contributed by 8 to 15 (GPTGTGKS). Residue 10–15 (TGTGKS) coordinates substrate.

The protein belongs to the IPP transferase family. In terms of assembly, monomer. Mg(2+) is required as a cofactor.

It catalyses the reaction adenosine(37) in tRNA + dimethylallyl diphosphate = N(6)-dimethylallyladenosine(37) in tRNA + diphosphate. Catalyzes the transfer of a dimethylallyl group onto the adenine at position 37 in tRNAs that read codons beginning with uridine, leading to the formation of N6-(dimethylallyl)adenosine (i(6)A). The chain is tRNA dimethylallyltransferase from Mycobacterium sp. (strain JLS).